A 511-amino-acid polypeptide reads, in one-letter code: Probable eukaryotic translation initiation factor 4H (511 aa).

Disordered regions lie at residues 25-63 and 154-511; these read SWAD…DRGS and TIRV…EVKI. A compositionally biased stretch (basic and acidic residues) spans 39–51; it reads AREESGSGLKRGD. The RRM domain occupies 86-162; sequence FTAFIGNLSF…RTIRVNVAEA (77 aa). Polar residues predominate over residues 179 to 196; that stretch reads WRRSTPLASRESSSQPSR. Basic and acidic residues-rich tracts occupy residues 230-247 and 261-270; these read VRRD…RDPG and LAEKVDRDVP. Residues 285–318 show a composition bias toward polar residues; that stretch reads LADTEQTWSRGTKLRTPTTTSRQSSADSTPSSGA. Over residues 331 to 349 the composition is skewed to low complexity; sequence TAGSPSATANATPAAPASG. Ser334 is modified (phosphoserine). Basic and acidic residues-rich tracts occupy residues 360–388 and 394–419; these read AARE…EKQK and KPVE…DKVA. The segment covering 420–434 has biased composition (low complexity); sequence GKPTTAPATTTNTGA. Over residues 438–448 the composition is skewed to basic and acidic residues; that stretch reads GSADRAKKDEQ. Polar residues predominate over residues 451–467; the sequence is EQVQPSRKSSQTGATSE. Residues 502–511 are compositionally biased toward basic and acidic residues; that stretch reads VTKGVEEVKI.

The protein resides in the cytoplasm. It localises to the P-body. Functionally, probable translation initiation factor. This Cryptococcus neoformans var. grubii serotype A (strain H99 / ATCC 208821 / CBS 10515 / FGSC 9487) (Filobasidiella neoformans var. grubii) protein is Probable eukaryotic translation initiation factor 4H.